We begin with the raw amino-acid sequence, 117 residues long: NADH-ubiquinone oxidoreductase chain 3 (117 aa).

Helical transmembrane passes span 3-23 (LLLTILFITTILSLILAIVSF), 56-76 (FFLVAILFLLFDLEIALLLPL), and 85-105 (PMFTLLWASALLIMLTLGLIY).

The protein belongs to the complex I subunit 3 family.

The protein resides in the mitochondrion membrane. The catalysed reaction is a ubiquinone + NADH + 5 H(+)(in) = a ubiquinol + NAD(+) + 4 H(+)(out). Core subunit of the mitochondrial membrane respiratory chain NADH dehydrogenase (Complex I) that is believed to belong to the minimal assembly required for catalysis. Complex I functions in the transfer of electrons from NADH to the respiratory chain. The immediate electron acceptor for the enzyme is believed to be ubiquinone. The chain is NADH-ubiquinone oxidoreductase chain 3 (MT-ND3) from Tetraodon nigroviridis (Spotted green pufferfish).